The following is a 337-amino-acid chain: Casein kinase I isoform alpha (337 aa).

One can recognise a Protein kinase domain in the interval 20 to 288 (YRVIRKIGSG…YLRQLFRILF (269 aa)). ATP-binding positions include 26–34 (IGSGSFGDI) and Lys-49. Catalysis depends on Asp-139, which acts as the Proton acceptor.

This sequence belongs to the protein kinase superfamily. CK1 Ser/Thr protein kinase family. Casein kinase I subfamily. In terms of assembly, interacts with cos. It depends on Mg(2+) as a cofactor. Post-translationally, phosphorylated. The dephosphorylated kinase is active in the cytoplasm while the active kinase in the nucleus is phosphorylated.

It localises to the cytoplasm. Its subcellular location is the nucleus. It catalyses the reaction L-seryl-[protein] + ATP = O-phospho-L-seryl-[protein] + ADP + H(+). It carries out the reaction L-threonyl-[protein] + ATP = O-phospho-L-threonyl-[protein] + ADP + H(+). With respect to regulation, activity increases following DNA damage. Its function is as follows. Casein kinases are operationally defined by their preferential utilization of acidic proteins such as caseins as substrates. Can phosphorylate a large number of proteins. Negative regulator of wg signaling. Phosphorylates arm directly or indirectly and stimulates its degradation which prevents inappropriate wg signaling. Phosphorylates smo which promotes its accumulation at the cell surface and its signaling activity in response to hh. Together with dco, regulates proteolytic processing of ci by phosphorylating it, which promotes its binding to slmb, the F-box recognition component of the SCF(slmb) E3 ubiquitin-protein ligase required for ci processing. Inhibits condensin II interphase activity by promoting degradation of the Cap-H2 regulatory subunit and limiting the levels of chromatin-bound Cap-H2 which regulates interphase chromosome organization. In Drosophila melanogaster (Fruit fly), this protein is Casein kinase I isoform alpha (CkIalpha).